The following is a 560-amino-acid chain: Dihydroxy-acid dehydratase (560 aa).

Aspartate 78 contacts Mg(2+). Position 119 (cysteine 119) interacts with [2Fe-2S] cluster. Positions 120 and 121 each coordinate Mg(2+). The residue at position 121 (lysine 121) is an N6-carboxylysine. Cysteine 192 is a binding site for [2Fe-2S] cluster. Position 446 (glutamate 446) interacts with Mg(2+). Serine 472 (proton acceptor) is an active-site residue.

It belongs to the IlvD/Edd family. In terms of assembly, homodimer. [2Fe-2S] cluster serves as cofactor. It depends on Mg(2+) as a cofactor.

It carries out the reaction (2R)-2,3-dihydroxy-3-methylbutanoate = 3-methyl-2-oxobutanoate + H2O. It catalyses the reaction (2R,3R)-2,3-dihydroxy-3-methylpentanoate = (S)-3-methyl-2-oxopentanoate + H2O. Its pathway is amino-acid biosynthesis; L-isoleucine biosynthesis; L-isoleucine from 2-oxobutanoate: step 3/4. The protein operates within amino-acid biosynthesis; L-valine biosynthesis; L-valine from pyruvate: step 3/4. In terms of biological role, functions in the biosynthesis of branched-chain amino acids. Catalyzes the dehydration of (2R,3R)-2,3-dihydroxy-3-methylpentanoate (2,3-dihydroxy-3-methylvalerate) into 2-oxo-3-methylpentanoate (2-oxo-3-methylvalerate) and of (2R)-2,3-dihydroxy-3-methylbutanoate (2,3-dihydroxyisovalerate) into 2-oxo-3-methylbutanoate (2-oxoisovalerate), the penultimate precursor to L-isoleucine and L-valine, respectively. The sequence is that of Dihydroxy-acid dehydratase from Anaeromyxobacter sp. (strain K).